The primary structure comprises 138 residues: MLKEFQEFALKGNMVDLAIGVIIGGAFGGLVNSIVNDIIMPIIGLITGGIDFSNMFIQLAGDPKTTLAAAREAGATIAYGNFITLLINFMIIAWVLFLVVKLMNRLKKREEAKPAPAAPSEEVLLTEIRDILAKQQKA.

3 consecutive transmembrane segments (helical) span residues Val-15–Val-35, Ile-38–Gln-58, and Gly-80–Val-100.

This sequence belongs to the MscL family. As to quaternary structure, homopentamer.

The protein resides in the cell inner membrane. In terms of biological role, channel that opens in response to stretch forces in the membrane lipid bilayer. May participate in the regulation of osmotic pressure changes within the cell. The protein is Large-conductance mechanosensitive channel of Brucella ovis (strain ATCC 25840 / 63/290 / NCTC 10512).